A 421-amino-acid polypeptide reads, in one-letter code: Thymidine phosphorylase (421 aa).

The protein belongs to the thymidine/pyrimidine-nucleoside phosphorylase family. In terms of assembly, homodimer.

It carries out the reaction thymidine + phosphate = 2-deoxy-alpha-D-ribose 1-phosphate + thymine. Its function is as follows. The enzymes which catalyze the reversible phosphorolysis of pyrimidine nucleosides are involved in the degradation of these compounds and in their utilization as carbon and energy sources, or in the rescue of pyrimidine bases for nucleotide synthesis. This Mycoplasma genitalium (strain ATCC 33530 / DSM 19775 / NCTC 10195 / G37) (Mycoplasmoides genitalium) protein is Thymidine phosphorylase (deoA).